Here is a 157-residue protein sequence, read N- to C-terminus: MPPPAAVASLTLQVPGGAHDVTSLATSPRTMAVPGTTEQLTIFYSGSMVKFDNVPREKIRYACRLRRLYSSLQRSLQTQDTSMFPSSSSLHIQTKRRGYSVIRLLREMLMVCSSTRTKPMLVHSDSIGAQRTGTPPSRRRIHARGKSRSCQEMSHCW.

A Tify domain is found at 33-68 (VPGTTEQLTIFYSGSMVKFDNVPREKIRYACRLRRL). The segment at 126-147 (SIGAQRTGTPPSRRRIHARGKS) is disordered. Positions 137–147 (SRRRIHARGKS) are enriched in basic residues.

Belongs to the TIFY/JAZ family. In terms of processing, ubiquitinated. Targeted for degradation by the SCF(COI1) E3 ubiquitin ligase-proteasome pathway during jasmonate signaling.

Functionally, repressor of jasmonate responses. The sequence is that of Protein TIFY 8 from Oryza sativa subsp. japonica (Rice).